Reading from the N-terminus, the 194-residue chain is Cilia- and flagella-associated protein 107 (194 aa).

Mn regions lie at residues 45–60 and 95–107; these read TPQS…FPDH and ISTY…RHGY.

In terms of assembly, microtubule inner protein component of sperm flagellar doublet microtubules. In terms of tissue distribution, expressed in airway epithelial cells.

The protein localises to the cytoplasm. It localises to the cytoskeleton. It is found in the cilium axoneme. Its subcellular location is the flagellum axoneme. Its function is as follows. Microtubule inner protein (MIP) part of the dynein-decorated doublet microtubules (DMTs) in cilia axoneme, which is required for motile cilia beating. The protein is Cilia- and flagella-associated protein 107 of Homo sapiens (Human).